A 195-amino-acid chain; its full sequence is uncharacterized protein (195 aa).

The disordered stretch occupies residues 1–35; sequence MASSSSAALRPFGTARLTPGRQTGRQTQQQISAPE. A compositionally biased stretch (low complexity) spans 20 to 30; the sequence is GRQTGRQTQQQ. Positions 76–184 constitute an MSP domain; the sequence is GVTVIPRVAR…PASINMALEA (109 aa).

This is an uncharacterized protein from Caenorhabditis elegans.